The sequence spans 155 residues: Probable tellurium resistance transcriptional regulator TerW (155 aa).

In terms of biological role, involved in tellurite resistance. TerW binds specifically to the potential promoter region of the terZABCDE operon and probably regulates expression of the genes. The sequence is that of Probable tellurium resistance transcriptional regulator TerW from Escherichia coli.